We begin with the raw amino-acid sequence, 492 residues long: Probable glycogen synthase 2 (492 aa).

Lysine 15 is an ADP-alpha-D-glucose binding site.

Belongs to the glycosyltransferase 1 family. Bacterial/plant glycogen synthase subfamily.

It catalyses the reaction [(1-&gt;4)-alpha-D-glucosyl](n) + ADP-alpha-D-glucose = [(1-&gt;4)-alpha-D-glucosyl](n+1) + ADP + H(+). It functions in the pathway glycan biosynthesis; glycogen biosynthesis. Synthesizes alpha-1,4-glucan chains using ADP-glucose. The protein is Probable glycogen synthase 2 (glgA2) of Nostoc sp. (strain PCC 7120 / SAG 25.82 / UTEX 2576).